A 305-amino-acid chain; its full sequence is Aquaporin-1 (305 aa).

A disordered region spans residues 1–34 (MSSNDSNDTDKQHTRLDPTGVDDAYIPPEQPETK). Over 1-48 (MSSNDSNDTDKQHTRLDPTGVDDAYIPPEQPETKHHRFKISRDTLRDH) the chain is Cytoplasmic. The chain crosses the membrane as a helical span at residues 49–69 (FIAAVGEFCGTFMFLWCAYVI). The Extracellular segment spans residues 70-91 (CNVANHDVALVAAPDGSHPGQL). A helical transmembrane segment spans residues 92-112 (IMIAIGFGFSVMFSIWCFAGV). Over 113–136 (SGGALNPAMSLSLCLARAVSPTRC) the chain is Cytoplasmic. Positions 118–120 (NPA) match the NPA 1 motif. The chain crosses the membrane as a helical span at residues 137–157 (VVMWVSQIVAGMAAGGAASAM). Residues 158–176 (TPGEVLFANSLGLGCSRTR) are Extracellular-facing. The chain crosses the membrane as a helical span at residues 177-197 (GLFLEMFGTAILCLTVLMTAV). Residues 198 to 203 (EKRETN) lie on the Cytoplasmic side of the membrane. The helical transmembrane segment at 204–224 (FMAALPIGISLFIAHVALTAY) threads the bilayer. Residues 225-248 (TGTGVNPARSLGAAVAARYFPHYH) lie on the Extracellular side of the membrane. An NPA 2 motif is present at residues 230–232 (NPA). The helical transmembrane segment at 249 to 269 (WIYWIGTLLGSILAWSVWQLL) threads the bilayer. Residues 270–305 (QILDYTTYVTAEKAASTKEKAQKKGETSSSSAVAEV) lie on the Cytoplasmic side of the membrane. Residues 286–295 (TKEKAQKKGE) show a composition bias toward basic and acidic residues. Positions 286 to 305 (TKEKAQKKGETSSSSAVAEV) are disordered. Positions 296-305 (TSSSSAVAEV) are enriched in polar residues.

It belongs to the MIP/aquaporin (TC 1.A.8) family.

It is found in the endoplasmic reticulum membrane. Its subcellular location is the cell membrane. Its function is as follows. Water channel required to facilitate the transport of water across membranes. Involved in sporulation, freeze tolerance and osmotolerance. Is non-functional in most laboratory strains. The sequence is that of Aquaporin-1 (AQY1) from Saccharomyces cerevisiae (strain ATCC 204508 / S288c) (Baker's yeast).